The following is a 385-amino-acid chain: MHVMYIAGVMSGTSLDGIDVALVRIEGSGVESKVELIHFTTVPFCNDIKSEIQQALSIENSNVQLICSLNFKLGLCFANAVKEVCKEANFSLEQLDLIGSHGQTIYHQPKQDGNRIPSTLQIGEPAVIAYETNTTVISNFRTMDMAAGGQGAPLVPYSEVILYRDPSKNRLLQNIGGISNVTVIPNQQSDQNVIAFDTGPGNMIIDEVCQRLFQLPYDQNGEIAKQGRVVNEILTYCMSHQFLKMNPPKSTGREQFGEKFVSELLKRFEKHSKENILTTVTMFTANSIVHHYKKFILPYYEIDEVILGGGGSYNSTLVEMLRNGLKDENCAIFIQEDIGYSSEAKEAIAFAILANETHHCNPSNVPSATGAKQSVVLGNITFPPV.

12 to 19 contributes to the ATP binding site; sequence GTSLDGID.

Belongs to the anhydro-N-acetylmuramic acid kinase family.

It catalyses the reaction 1,6-anhydro-N-acetyl-beta-muramate + ATP + H2O = N-acetyl-D-muramate 6-phosphate + ADP + H(+). It functions in the pathway amino-sugar metabolism; 1,6-anhydro-N-acetylmuramate degradation. Its pathway is cell wall biogenesis; peptidoglycan recycling. In terms of biological role, catalyzes the specific phosphorylation of 1,6-anhydro-N-acetylmuramic acid (anhMurNAc) with the simultaneous cleavage of the 1,6-anhydro ring, generating MurNAc-6-P. Is required for the utilization of anhMurNAc either imported from the medium or derived from its own cell wall murein, and thus plays a role in cell wall recycling. In Bacillus thuringiensis (strain Al Hakam), this protein is Anhydro-N-acetylmuramic acid kinase.